The sequence spans 218 residues: Adenylate kinase (218 aa).

Position 10 to 15 (10 to 15 (GAGKGT)) interacts with ATP. The segment at 30–59 (STGDMLRAAVKAGTPLGIAAKKIMDEGGLV) is NMP. AMP contacts are provided by residues Thr-31, Arg-36, 57–59 (GLV), 85–88 (GFPR), and Gln-92. The interval 122–159 (GRRVHPASGRTYHVKFNPPKVAGKDDLTGEELIQRDDD) is LID. ATP-binding positions include Arg-123 and 132–133 (TY). Arg-156 and Arg-167 together coordinate AMP. ATP is bound at residue Gly-203.

This sequence belongs to the adenylate kinase family. Monomer.

It localises to the cytoplasm. It catalyses the reaction AMP + ATP = 2 ADP. The protein operates within purine metabolism; AMP biosynthesis via salvage pathway; AMP from ADP: step 1/1. In terms of biological role, catalyzes the reversible transfer of the terminal phosphate group between ATP and AMP. Plays an important role in cellular energy homeostasis and in adenine nucleotide metabolism. This chain is Adenylate kinase, found in Janthinobacterium sp. (strain Marseille) (Minibacterium massiliensis).